Here is a 128-residue protein sequence, read N- to C-terminus: Protein Wnt-8 (128 aa).

Ser1 carries O-palmitoleoyl serine lipidation. Cystine bridges form between Cys71-Cys109 and Cys87-Cys102. N-linked (GlcNAc...) asparagine glycans are attached at residues Asn74 and Asn93.

Belongs to the Wnt family. In terms of processing, palmitoleoylation is required for efficient binding to frizzled receptors. Depalmitoleoylation leads to Wnt signaling pathway inhibition. Proteolytic processing by tiki1 and tiki2 promotes oxidation and formation of large disulfide-bond oligomers, leading to inactivation of wnt8.

The protein localises to the secreted. It localises to the extracellular space. The protein resides in the extracellular matrix. Functionally, ligand for members of the frizzled family of seven transmembrane receptors. Probable developmental protein. May be a signaling molecule which affects the development of discrete regions of tissues. Is likely to signal over only few cell diameters. This is Protein Wnt-8 (wnt8) from Thunnus thynnus (Atlantic bluefin tuna).